Here is a 505-residue protein sequence, read N- to C-terminus: Lysine--tRNA ligase, heat inducible (505 aa).

Residues lysine 114 and lysine 156 each carry the N6-acetyllysine modification. 2 residues coordinate Mg(2+): glutamate 415 and glutamate 422.

It belongs to the class-II aminoacyl-tRNA synthetase family. As to quaternary structure, homodimer. The cofactor is Mg(2+).

The protein resides in the cytoplasm. It carries out the reaction tRNA(Lys) + L-lysine + ATP = L-lysyl-tRNA(Lys) + AMP + diphosphate. The polypeptide is Lysine--tRNA ligase, heat inducible (lysU) (Escherichia coli O157:H7).